The sequence spans 555 residues: uncharacterized protein (555 aa).

ABC transporter domains are found at residues 4–244 and 255–547; these read VKVK…PPYK and IQVR…ARFM. ATP-binding positions include 36–43 and 292–299; these read GKSGAGKS and GPSGVGKT.

This sequence belongs to the ABC transporter superfamily.

This is an uncharacterized protein from Methanocaldococcus jannaschii (strain ATCC 43067 / DSM 2661 / JAL-1 / JCM 10045 / NBRC 100440) (Methanococcus jannaschii).